A 301-amino-acid chain; its full sequence is Phosphonates import ATP-binding protein PhnC (301 aa).

The ABC transporter domain maps to 8-256 (IRIERLSKTF…LLKTLYGDEA (249 aa)). 41-48 (GASGSGKS) provides a ligand contact to ATP. A disordered region spans residues 264–287 (AQGPDDTESKNTADNTPLQDAAPA).

It belongs to the ABC transporter superfamily. Phosphonates importer (TC 3.A.1.9.1) family. As to quaternary structure, the complex is composed of two ATP-binding proteins (PhnC), two transmembrane proteins (PhnE) and a solute-binding protein (PhnD).

The protein localises to the cell inner membrane. The catalysed reaction is phosphonate(out) + ATP + H2O = phosphonate(in) + ADP + phosphate + H(+). Functionally, part of the ABC transporter complex PhnCDE involved in phosphonates import. Responsible for energy coupling to the transport system. The chain is Phosphonates import ATP-binding protein PhnC from Paraburkholderia xenovorans (strain LB400).